The sequence spans 566 residues: Berberine bridge enzyme-like D-2 (566 aa).

The N-terminal stretch at 1-33 is a signal peptide; that stretch reads MKRNISMSLQRLLIILMMISFLFTSLLVPSVSA. An intrachain disulfide couples cysteine 42 to cysteine 103. Asparagine 50 is a glycosylation site (N-linked (GlcNAc...) asparagine). The region spanning 81–257 is the FAD-binding PCMH-type domain; the sequence is SKPKPTVIIV…YAWKIRLLKV (177 aa). Residue histidine 118 is modified to Pros-8alpha-FAD histidine. 3 N-linked (GlcNAc...) asparagine glycosylation sites follow: asparagine 364, asparagine 378, and asparagine 503.

The protein belongs to the oxygen-dependent FAD-linked oxidoreductase family. FAD is required as a cofactor.

Its subcellular location is the vacuole. Its pathway is alkaloid biosynthesis; nicotine biosynthesis. Involved in the biosynthesis of pyridine alkaloid natural products, leading mainly to the production of anabasine, anatabine, nicotine and nornicotine, effective deterrents against herbivores with antiparasitic and pesticide properties (neurotoxins); nornicotine serves as the precursor in the synthesis of the carcinogen compound N'-nitrosonornicotine (NNN). Catalyzes a late oxidation step subsequent to the pyridine ring condensation reaction in the biosynthesis of alkaloids. The polypeptide is Berberine bridge enzyme-like D-2 (Nicotiana tabacum (Common tobacco)).